The following is a 136-amino-acid chain: UPF0225 protein Mpe_A2093 (136 aa).

Belongs to the UPF0225 family.

The chain is UPF0225 protein Mpe_A2093 from Methylibium petroleiphilum (strain ATCC BAA-1232 / LMG 22953 / PM1).